We begin with the raw amino-acid sequence, 302 residues long: Phytoene synthase (302 aa).

This sequence belongs to the phytoene/squalene synthase family. ATP serves as cofactor. The cofactor is Mn(2+). Mg(2+) is required as a cofactor.

Its pathway is carotenoid biosynthesis; phytoene biosynthesis. Involved in the biosynthesis of carotenoids. Catalyzes the condensation of two molecules of geranylgeranyl diphosphate (GGPP) to give prephytoene diphosphate (PPPP) and the subsequent rearrangement of the cyclopropylcarbinyl intermediate to yield phytoene. The chain is Phytoene synthase (crtB) from Mycobacterium bovis (strain ATCC BAA-935 / AF2122/97).